The following is a 236-amino-acid chain: Probable metal transport system ATP-binding protein TC_0697 (236 aa).

Positions 5–236 (LILENVSFRY…FCCNTFGKCS (232 aa)) constitute an ABC transporter domain. An ATP-binding site is contributed by 39–46 (GPNGGGKT).

This sequence belongs to the ABC transporter superfamily.

The protein resides in the cell inner membrane. In terms of biological role, part of an ATP-driven transport system TC_0696/TC_0697/TC_0698 for a metal. Probably responsible for energy coupling to the transport system. This is Probable metal transport system ATP-binding protein TC_0697 from Chlamydia muridarum (strain MoPn / Nigg).